The following is a 20-amino-acid chain: Luminal-binding protein (20 aa).

The protein belongs to the heat shock protein 70 family.

It is found in the endoplasmic reticulum lumen. Its function is as follows. Probably plays a role in facilitating the assembly of multimeric protein complexes inside the ER. This Phaseolus vulgaris (Kidney bean) protein is Luminal-binding protein.